The chain runs to 485 residues: NADH-quinone oxidoreductase subunit N (485 aa).

14 consecutive transmembrane segments (helical) span residues 8–28, 35–55, 71–91, 105–125, 127–147, 159–179, 203–223, 235–255, 271–291, 297–317, 326–346, 373–393, 408–430, and 455–475; these read LIALLPLLIVGLTVVVVMLSI, FLNATLSVIGLNAALVSLWFV, GFAMLYTGLVLLASLATCTFA, FYLLVLIAALGGILLANANHL, SLFLGIELISLPLFGLVGYAF, YTILSAAASSFLLFGMALVYA, LLAGFGLMIVGLGFKLSLVPF, PAPVSTFLATASKIAIFGVVM, VVLAIIAFASIIFGNLMALSQ, LLGYSSISHLGYLLVALIALQ, VGVYLVGYLFSSLGAFGVVSL, AAVMTVMMLSLAGIPMTLGFI, WWLVGAVVVGSAIGLYYYLRVAV, and IVVLISALLVLVLGVWPQPLI.

It belongs to the complex I subunit 2 family. In terms of assembly, NDH-1 is composed of 13 different subunits. Subunits NuoA, H, J, K, L, M, N constitute the membrane sector of the complex.

It localises to the cell inner membrane. It catalyses the reaction a quinone + NADH + 5 H(+)(in) = a quinol + NAD(+) + 4 H(+)(out). Its function is as follows. NDH-1 shuttles electrons from NADH, via FMN and iron-sulfur (Fe-S) centers, to quinones in the respiratory chain. The immediate electron acceptor for the enzyme in this species is believed to be ubiquinone. Couples the redox reaction to proton translocation (for every two electrons transferred, four hydrogen ions are translocated across the cytoplasmic membrane), and thus conserves the redox energy in a proton gradient. In Escherichia coli O6:K15:H31 (strain 536 / UPEC), this protein is NADH-quinone oxidoreductase subunit N.